Here is a 153-residue protein sequence, read N- to C-terminus: Aspartate carbamoyltransferase regulatory chain (153 aa).

4 residues coordinate Zn(2+): Cys-109, Cys-114, Cys-138, and Cys-141.

It belongs to the PyrI family. In terms of assembly, contains catalytic and regulatory chains. The cofactor is Zn(2+).

Involved in allosteric regulation of aspartate carbamoyltransferase. This chain is Aspartate carbamoyltransferase regulatory chain, found in Escherichia coli O7:K1 (strain IAI39 / ExPEC).